The chain runs to 601 residues: Probable Xaa-Pro aminopeptidase P (601 aa).

Mn(2+) is bound by residues Asp398, Asp409, Glu507, and Glu521.

The protein belongs to the peptidase M24B family. Requires Mn(2+) as cofactor.

It carries out the reaction Release of any N-terminal amino acid, including proline, that is linked to proline, even from a dipeptide or tripeptide.. Its function is as follows. Catalyzes the removal of a penultimate prolyl residue from the N-termini of peptides. The chain is Probable Xaa-Pro aminopeptidase P (ampp) from Sclerotinia sclerotiorum (strain ATCC 18683 / 1980 / Ss-1) (White mold).